The sequence spans 161 residues: MSLSTSLRLLRLLPAISSTATLQFALDEHLIFGTWMGSFLRPHVNITLPTWWTHGGRRWQWILIIGYPLNYLFGILNLVARYDQLQSTGSTIWYVLGLFFSVGHMLFVKMALGRIAAIEKGVPKDNVRVSMGKWLQMNWVRALITDLPAWICWIMAAVSAM.

The signal sequence occupies residues Met1–Ser18. Residue Asn45 is glycosylated (N-linked (GlcNAc...) asparagine). Helical transmembrane passes span Trp59–Val79, Ile92–Leu112, and Trp139–Ser159.

This sequence belongs to the epoxidase xenD family.

It localises to the membrane. It participates in mycotoxin biosynthesis. Functionally, epoxidase; part of the gene cluster that mediates the biosynthesis of GKK1032, fungal natural products containing a macrocyclic para-cyclophane connected to a decahydrofluorene ring system that show potent antitumor activities. Within the pathway, gkaX functions synergistically with gkaB and gkaZ to form the cyclophane. The pathway begins with the PKS-NRPS gkaA which, with the help of the trans-enoyl reductase gkaC, synthesizes the polyketide-tyrosyl acyl thioester product which can be reductively off-loaded by the terminal reductase (R) domain in gkaA. The alpha/beta hydrolase gkaG is then required to catalyze the subsequent Knoevenagel condensation that affords the 3-pyrrolin-2-one ring, whereas the three proteins gkaB, gkaX and gkaZ then function synergistically to form the cyclophane. This chain is Epoxidase gkaX, found in Penicillium citrinum.